A 337-amino-acid polypeptide reads, in one-letter code: Tetraacyldisaccharide 4'-kinase (337 aa).

ATP is bound at residue 56-63 (VAGGAGKT).

It belongs to the LpxK family.

It catalyses the reaction a lipid A disaccharide + ATP = a lipid IVA + ADP + H(+). Its pathway is glycolipid biosynthesis; lipid IV(A) biosynthesis; lipid IV(A) from (3R)-3-hydroxytetradecanoyl-[acyl-carrier-protein] and UDP-N-acetyl-alpha-D-glucosamine: step 6/6. Its function is as follows. Transfers the gamma-phosphate of ATP to the 4'-position of a tetraacyldisaccharide 1-phosphate intermediate (termed DS-1-P) to form tetraacyldisaccharide 1,4'-bis-phosphate (lipid IVA). This is Tetraacyldisaccharide 4'-kinase from Rhodospirillum centenum (strain ATCC 51521 / SW).